The following is a 242-amino-acid chain: Guanylate kinase (242 aa).

Residues 22–200 (GLLIVMTGAS…AVRELQAVQR (179 aa)) enclose the Guanylate kinase-like domain. Position 29-36 (29-36 (GASGVGKG)) interacts with ATP.

Belongs to the guanylate kinase family.

Its subcellular location is the cytoplasm. The enzyme catalyses GMP + ATP = GDP + ADP. Its function is as follows. Essential for recycling GMP and indirectly, cGMP. The chain is Guanylate kinase from Deinococcus geothermalis (strain DSM 11300 / CIP 105573 / AG-3a).